The primary structure comprises 845 residues: Putative DEAD-box ATP-dependent RNA helicase 33 (845 aa).

Disordered regions lie at residues 129–149 and 282–302; these read GHPDSGEKTAKLKQSHGPMSP and KFRKNDSSTEEDSDEEGNEGK. Positions 289-298 are enriched in acidic residues; the sequence is STEEDSDEEG. Residues 375-403 carry the Q motif motif; sequence KRFDESCISPLTLKALSASGIVKMTRVQD. In terms of domain architecture, Helicase ATP-binding spans 406 to 590; the sequence is LSECLDGKDA…QLVLKRDHSY (185 aa). 419 to 426 contacts ATP; it reads AKTGTGKS. A DEAD box motif is present at residues 538-541; it reads DEAD. Positions 624–778 constitute a Helicase C-terminal domain; sequence LLKEHINNMP…QVDQSMAKID (155 aa).

Belongs to the DEAD box helicase family.

The catalysed reaction is ATP + H2O = ADP + phosphate + H(+). This chain is Putative DEAD-box ATP-dependent RNA helicase 33 (RH33), found in Arabidopsis thaliana (Mouse-ear cress).